A 355-amino-acid polypeptide reads, in one-letter code: RING finger protein 113 homolog (355 aa).

Positions 1–167 are disordered; that stretch reads MEKEESTNKN…GGSDNNDDGI (167 aa). The span at 8 to 18 shows a compositional bias: low complexity; that stretch reads NKNNENIQSEN. Positions 37-48 are enriched in basic residues; it reads IFKKPNKQRNIR. Residues 62–71 are compositionally biased toward acidic residues; it reads ADEEDEDGNE. Composition is skewed to low complexity over residues 99–110 and 131–155; these read SSGNAGSSINSA and SSSR…SNSE. The C3H1-type zinc finger occupies 214–237; that stretch reads VCKDYKQTGQCTFGDACKFLHDRS. Residues 258–277 are disordered; sequence LNNINGIKNNNNDNKNNDDD. Positions 259 to 271 are enriched in low complexity; it reads NNINGIKNNNNDN. Residues 287–325 form an RING-type zinc finger; sequence CFICKKQYVDPVQTKCKHFFCEDCALTHNRKNKKCALCG.

The protein is RING finger protein 113 homolog (rnf113) of Dictyostelium discoideum (Social amoeba).